The sequence spans 938 residues: Chaperone protein ClpD1, chloroplastic (938 aa).

Residues 1-83 constitute a chloroplast transit peptide; the sequence is MEVCCCSTSS…FERFTERAVK (83 aa). 2 repeat regions span residues 84–145 and 159–224; these read AVVL…TPGA and FSGS…LQAE. One can recognise a Clp R domain in the interval 84 to 224; that stretch reads AVVLSQREAK…SVALTRLQAE (141 aa). Positions 234-255 are disordered; sequence GASSFKVPKKSPAGAGRSAFSK. The i stretch occupies residues 266–519; the sequence is LDQFCLDLTT…RMESFNRKKE (254 aa). ATP is bound by residues 311 to 318 and 660 to 667; these read GEAGVGKT and GPTGVGKT. The interval 586-777 is II; that stretch reads VGTEEIARVA…LIVMTSNIGS (192 aa).

Belongs to the ClpA/ClpB family. ClpD subfamily. As to expression, expressed in stems, culms and leaves.

The protein localises to the plastid. The protein resides in the chloroplast. In terms of biological role, molecular chaperone that may function in heat stress response. May interact with a ClpP-like protease involved in degradation of denatured proteins in the chloroplast. Chaperone involved in response to abiotic stresses. Plays a positive role during dehydration and salt stress. The sequence is that of Chaperone protein ClpD1, chloroplastic from Oryza sativa subsp. japonica (Rice).